The chain runs to 49 residues: Large ribosomal subunit protein bL33B (49 aa).

Belongs to the bacterial ribosomal protein bL33 family.

This chain is Large ribosomal subunit protein bL33B, found in Listeria welshimeri serovar 6b (strain ATCC 35897 / DSM 20650 / CCUG 15529 / CIP 8149 / NCTC 11857 / SLCC 5334 / V8).